A 588-amino-acid polypeptide reads, in one-letter code: DNA ligase (588 aa).

Residue E250 participates in ATP binding. K252 acts as the N6-AMP-lysine intermediate in catalysis. Residues R257, R272, E302, F342, R417, and K423 each contribute to the ATP site.

Belongs to the ATP-dependent DNA ligase family. Requires Mg(2+) as cofactor.

The enzyme catalyses ATP + (deoxyribonucleotide)n-3'-hydroxyl + 5'-phospho-(deoxyribonucleotide)m = (deoxyribonucleotide)n+m + AMP + diphosphate.. Its function is as follows. DNA ligase that seals nicks in double-stranded DNA during DNA replication, DNA recombination and DNA repair. In Nitrosopumilus maritimus (strain SCM1), this protein is DNA ligase.